The chain runs to 146 residues: Aminoglycoside N(6')-acetyltransferase type 1 (146 aa).

An N-acetyltransferase domain is found at 1 to 146; sequence MNIMPISESQ…RVVYFKKNIG (146 aa). Substrate is bound by residues W22, H25, Y66, and E79. 81–83 lines the acetyl-CoA pocket; that stretch reads IFV. Residue D115 coordinates substrate. N120 is a binding site for acetyl-CoA. Position 136 (E136) interacts with substrate.

As to quaternary structure, homodimer.

It carries out the reaction kanamycin B + acetyl-CoA = N(6')-acetylkanamycin B + CoA + H(+). Functionally, catalyzes the transfer of an acetyl group from acetyl-CoA to the 6'-amino group of aminoglycoside molecules conferring resistance to antibiotics containing the purpurosamine ring including amikacin, kanamycin, tobramycin and netilmicin. The polypeptide is Aminoglycoside N(6')-acetyltransferase type 1 (Acinetobacter baumannii).